Here is a 151-residue protein sequence, read N- to C-terminus: UPAR/Ly6 domain-containing protein crok (151 aa).

An N-terminal signal peptide occupies residues 1-23 (MKTLEKYILFAIVLCCLLQLGQA). Topologically, residues 24–128 (IKCWDCRSDN…KDGCNSAGIH (105 aa)) are lumenal. Intrachain disulfides connect cysteine 26–cysteine 68, cysteine 29–cysteine 37, cysteine 51–cysteine 85, cysteine 100–cysteine 114, and cysteine 116–cysteine 122. A glycan (N-linked (GlcNAc...) asparagine) is linked at asparagine 43. Residue serine 124 is the site of GPI-anchor amidated serine attachment. Residues 125–151 (AGIHRLGLMGVLTGTLLSVIVAHLLRQ) constitute a propeptide, removed in mature form. The chain crosses the membrane as a helical span at residues 129–149 (RLGLMGVLTGTLLSVIVAHLL). Over 150–151 (RQ) the chain is Cytoplasmic.

This sequence belongs to the quiver family.

It is found in the vesicle. Its subcellular location is the membrane. The protein localises to the endomembrane system. In terms of biological role, required for septate junction assembly, possibly by organizing the preassembly and transport of septate junction proteins including dlg1/disks large 1 and Nrx-IV/Neurexin-IV. Involved in paracellular barrier functions of trachea, hindgut and salivary gland mediated by epithelial cell septate junctions. This is UPAR/Ly6 domain-containing protein crok from Drosophila melanogaster (Fruit fly).